The primary structure comprises 146 residues: Snaclec CTL-Eoc124 (146 aa).

Residues 1–23 form the signal peptide; it reads MGRFISVSFGLLVVFLSLSGTGA. 3 disulfide bridges follow: cysteine 25/cysteine 36, cysteine 53/cysteine 142, and cysteine 119/cysteine 134. The 112-residue stretch at 32–143 folds into the C-type lectin domain; it reads YQGHCYRVFN…CSRTNNVACK (112 aa).

It belongs to the snaclec family. In terms of assembly, heterodimer; disulfide-linked. Expressed by the venom gland.

The protein localises to the secreted. Functionally, interferes with one step of hemostasis (modulation of platelet aggregation, or coagulation cascade, for example). This is Snaclec CTL-Eoc124 from Echis ocellatus (Ocellated saw-scaled viper).